The primary structure comprises 1012 residues: Retinoblastoma-related protein (1012 aa).

The domain A stretch occupies residues 403–604 (TPVSTAMTTA…EKGSSMDNSL (202 aa)). The tract at residues 403-863 (TPVSTAMTTA…NEVFIPSVKP (461 aa)) is pocket. A spacer region spans residues 605–723 (IIARPALSAG…PGGGGETCAE (119 aa)). Residues 724-863 (TGINIFFSKI…NEVFIPSVKP (140 aa)) form a domain B region. Positions 884–905 (NNDKDGQCPGSPKLSTFPSLPD) are disordered.

It belongs to the retinoblastoma protein (RB) family.

It is found in the nucleus. Functionally, regulator of biological processes that recruits a histone deacetylase to control gene transcription. May play a role in the entry into mitosis, negatively regulating the cell proliferation. Formation of stable complexes with geminiviridae replication-associated proteins may create a cellular environment which favors viral DNA replication. This chain is Retinoblastoma-related protein (RB), found in Oxybasis rubra (Red goosefoot).